The sequence spans 323 residues: ADP-ribose glycohydrolase MACROD1 (323 aa).

N6-succinyllysine is present on residues K94, K101, and K127. A Glycyl lysine isopeptide (Lys-Gly) (interchain with G-Cter in SUMO2) cross-link involves residue K136. One can recognise a Macro domain in the interval 139–320 (DPKYKKDKQL…IYRERLPHYF (182 aa)). Residue 157 to 159 (GDI) participates in substrate binding. K161 is subject to N6-acetyllysine. Substrate-binding positions include 170–172 (AAN), 177–182 (GGGGVD), 265–271 (ISTGVFG), and F304.

The protein belongs to the MacroD-type family. MacroD1/2-like subfamily. Interacts with ESR1; Interacts in a manner that is estrogen independent but is enhanced by estrogen. Interacts (via macro domain) with AR.

It is found in the nucleus. It catalyses the reaction 3''-O-acetyl-ADP-D-ribose + H2O = ADP-D-ribose + acetate + H(+). It carries out the reaction 2''-O-acetyl-ADP-D-ribose + H2O = ADP-D-ribose + acetate + H(+). The enzyme catalyses 4-O-(ADP-D-ribosyl)-L-aspartyl-[protein] + H2O = L-aspartyl-[protein] + ADP-D-ribose + H(+). The catalysed reaction is 5-O-(ADP-D-ribosyl)-L-glutamyl-[protein] + H2O = L-glutamyl-[protein] + ADP-D-ribose + H(+). It catalyses the reaction alpha-NAD(+) + H2O = ADP-D-ribose + nicotinamide + H(+). Its activity is regulated as follows. Subject to competitive inhibition by the product ADP-ribose. Its function is as follows. Removes ADP-ribose from aspartate and glutamate residues in proteins bearing a single ADP-ribose moiety. Inactive towards proteins bearing poly-ADP-ribose. Deacetylates O-acetyl-ADP ribose, a signaling molecule generated by the deacetylation of acetylated lysine residues in histones and other proteins. Plays a role in estrogen signaling. Binds to androgen receptor (AR) and amplifies the transactivation function of AR in response to androgen. May play an important role in carcinogenesis and/or progression of hormone-dependent cancers by feed-forward mechanism that activates ESR1 transactivation. Could be an ESR1 coactivator, providing a positive feedback regulatory loop for ESR1 signal transduction. Could be involved in invasive growth by down-regulating CDH1 in endometrial cancer cells. Enhances ESR1-mediated transcription activity. The polypeptide is ADP-ribose glycohydrolase MACROD1 (Mus musculus (Mouse)).